The sequence spans 206 residues: Glutathione peroxidase 1 (206 aa).

S37 carries the post-translational modification Phosphoserine. U52 is an active-site residue. Residue U52 is a non-standard amino acid, selenocysteine. N6-acetyllysine; alternate is present on residues K91, K117, and K151. K91, K117, and K151 each carry N6-succinyllysine; alternate. Phosphoserine occurs at positions 200 and 204.

Belongs to the glutathione peroxidase family. Homotetramer. Interacts with MIEN1. Post-translationally, during periods of oxidative stress, Sec-52 may react with a superoxide radical, irreversibly lose hydroselenide and be converted to dehydroalanine.

The protein resides in the cytoplasm. Its subcellular location is the mitochondrion. The catalysed reaction is 2 glutathione + H2O2 = glutathione disulfide + 2 H2O. It carries out the reaction a hydroperoxy polyunsaturated fatty acid + 2 glutathione = a hydroxy polyunsaturated fatty acid + glutathione disulfide + H2O. It catalyses the reaction tert-butyl hydroperoxide + 2 glutathione = tert-butanol + glutathione disulfide + H2O. The enzyme catalyses cumene hydroperoxide + 2 glutathione = 2-phenylpropan-2-ol + glutathione disulfide + H2O. The catalysed reaction is (13S)-hydroperoxy-(9Z,11E)-octadecadienoate + 2 glutathione = (13S)-hydroxy-(9Z,11E)-octadecadienoate + glutathione disulfide + H2O. It carries out the reaction (9S)-hydroperoxy-(10E,12Z)-octadecadienoate + 2 glutathione = (9S)-hydroxy-(10E,12Z)-octadecadienoate + glutathione disulfide + H2O. It catalyses the reaction (5S)-hydroperoxy-(6E,8Z,11Z,14Z)-eicosatetraenoate + 2 glutathione = (5S)-hydroxy-(6E,8Z,11Z,14Z)-eicosatetraenoate + glutathione disulfide + H2O. The enzyme catalyses (12S)-hydroperoxy-(5Z,8Z,10E,14Z)-eicosatetraenoate + 2 glutathione = (12S)-hydroxy-(5Z,8Z,10E,14Z)-eicosatetraenoate + glutathione disulfide + H2O. The catalysed reaction is (12R)-hydroperoxy-(5Z,8Z,10E,14Z)-eicosatetraenoate + 2 glutathione = (12R)-hydroxy-(5Z,8Z,10E,14Z)-eicosatetraenoate + glutathione disulfide + H2O. It carries out the reaction (15S)-hydroperoxy-(5Z,8Z,11Z,13E)-eicosatetraenoate + 2 glutathione = (15S)-hydroxy-(5Z,8Z,11Z,13E)-eicosatetraenoate + glutathione disulfide + H2O. It catalyses the reaction (5S)-hydroperoxy-(6E,8Z,11Z,14Z,17Z)-eicosapentaenoate + 2 glutathione = (5S)-hydroxy-(6E,8Z,11Z,14Z,17Z)-eicosapentaenoate + glutathione disulfide + H2O. The enzyme catalyses (12S)-hydroperoxy-(5Z,8Z,10E,14Z,17Z)-eicosapentaenoate + 2 glutathione = (12S)-hydroxy-(5Z,8Z,10E,14Z,17Z)-eicosapentaenoate + glutathione disulfide + H2O. The catalysed reaction is (15S)-hydroperoxy-(5Z,8Z,11Z,13E,17Z)-eicosapentaenoate + 2 glutathione = (15S)-hydroxy-(5Z,8Z,11Z,13E,17Z)-eicosapentaenoate + glutathione disulfide + H2O. It carries out the reaction (15S)-hydroperoxy-(11Z,13E)-eicosadienoate + 2 glutathione = (15S)-hydroxy-(11Z,13E)-eicosadienoate + glutathione disulfide + H2O. It catalyses the reaction (17S)-hydroperoxy-(4Z,7Z,10Z,13Z,15E,19Z)-docosahexaenoate + 2 glutathione = (17S)-hydroxy-(4Z,7Z,10Z,13Z,15E,19Z)-docosahexaenoate + glutathione disulfide + H2O. Catalyzes the reduction of hydroperoxides in a glutathione-dependent manner thus regulating cellular redox homeostasis. Can reduce small soluble hydroperoxides such as H2O2, cumene hydroperoxide and tert-butyl hydroperoxide, as well as several fatty acid-derived hydroperoxides. In platelets catalyzes the reduction of 12-hydroperoxyeicosatetraenoic acid, the primary product of the arachidonate 12-lipoxygenase pathway. The polypeptide is Glutathione peroxidase 1 (GPX1) (Sus scrofa (Pig)).